The following is a 248-amino-acid chain: Probable transcriptional regulatory protein P9303_05381 (248 aa).

Belongs to the TACO1 family.

The protein resides in the cytoplasm. The polypeptide is Probable transcriptional regulatory protein P9303_05381 (Prochlorococcus marinus (strain MIT 9303)).